The sequence spans 244 residues: ATP synthase subunit b 2 (244 aa).

The helical transmembrane segment at 2–22 threads the bilayer; it reads TVDWWTIGLQVINVSVLIWLL.

It belongs to the ATPase B chain family. F-type ATPases have 2 components, F(1) - the catalytic core - and F(0) - the membrane proton channel. F(1) has five subunits: alpha(3), beta(3), gamma(1), delta(1), epsilon(1). F(0) has three main subunits: a(1), b(2) and c(10-14). The alpha and beta chains form an alternating ring which encloses part of the gamma chain. F(1) is attached to F(0) by a central stalk formed by the gamma and epsilon chains, while a peripheral stalk is formed by the delta and b chains.

It localises to the cell inner membrane. In terms of biological role, f(1)F(0) ATP synthase produces ATP from ADP in the presence of a proton or sodium gradient. F-type ATPases consist of two structural domains, F(1) containing the extramembraneous catalytic core and F(0) containing the membrane proton channel, linked together by a central stalk and a peripheral stalk. During catalysis, ATP synthesis in the catalytic domain of F(1) is coupled via a rotary mechanism of the central stalk subunits to proton translocation. Functionally, component of the F(0) channel, it forms part of the peripheral stalk, linking F(1) to F(0). The protein is ATP synthase subunit b 2 of Gluconobacter oxydans (strain 621H) (Gluconobacter suboxydans).